Consider the following 275-residue polypeptide: Octanoyl-[GcvH]:protein N-octanoyltransferase (275 aa).

In terms of domain architecture, BPL/LPL catalytic spans 42–246; that stretch reads GQSQPVVRLW…ALQAFGSRLE (205 aa). Cys145 (acyl-thioester intermediate) is an active-site residue.

The protein belongs to the octanoyltransferase LipL family.

It catalyses the reaction N(6)-octanoyl-L-lysyl-[glycine-cleavage complex H protein] + L-lysyl-[lipoyl-carrier protein] = N(6)-octanoyl-L-lysyl-[lipoyl-carrier protein] + L-lysyl-[glycine-cleavage complex H protein]. The protein operates within protein modification; protein lipoylation via endogenous pathway; protein N(6)-(lipoyl)lysine from octanoyl-[acyl-carrier-protein]. Catalyzes the amidotransfer (transamidation) of the octanoyl moiety from octanoyl-GcvH to the lipoyl domain of the E2 subunit of lipoate-dependent enzymes. This chain is Octanoyl-[GcvH]:protein N-octanoyltransferase, found in Anoxybacillus flavithermus (strain DSM 21510 / WK1).